Consider the following 351-residue polypeptide: Snurportin-1 (351 aa).

Disordered stretches follow at residues 1 to 66 (MESS…QKGI) and 294 to 322 (EQKKKVNEQKEDPHTMEAEEDVESDEYDS). Basic and acidic residues predominate over residues 8 to 42 (LYKKGLDIGEQQKQRQKELLKQQKLRRQQEQDDYR). Over residues 52–62 (PRKKSGKRSGH) the composition is skewed to basic residues. The stretch at 274–330 (VLQYMDAFEQKLAEHRRTLKEQKKKVNEQKEDPHTMEAEEDVESDEYDSLKRVLDQQ) forms a coiled coil. A compositionally biased stretch (basic and acidic residues) spans 294–310 (EQKKKVNEQKEDPHTME). Residues 311–320 (AEEDVESDEY) show a composition bias toward acidic residues.

This sequence belongs to the snurportin family. In terms of assembly, interacts with components of the snRNP complex including SmB and Smn; these interactions are RNA-dependent. Interacts with importin-7 msk but not with importin subunit beta Fs(2)Ket; the interaction is RNA-dependent.

The protein resides in the nucleus. Its subcellular location is the cytoplasm. It is found in the U-body. It localises to the nucleus speckle. The protein localises to the cajal body. In terms of biological role, functions as an U snRNP-specific nuclear import adapter. Involved in the trimethylguanosine (m3G)-cap-dependent nuclear import of U snRNPs. Binds specifically to the terminal m3G-cap U snRNAs. This is Snurportin-1 from Drosophila melanogaster (Fruit fly).